A 556-amino-acid polypeptide reads, in one-letter code: MATESNPALASLPSNVREIIELASQRDGGIPFRAKTAHVHRTWAGTFTSLPELYIQPESVSEIQKVVRLARHARRRVTTTGCGHSPSDITCTSSWLVNLDNFNKVISVDHLTGLVVVQAGIRLYQLSDELDRRGLALPSLGSINEQSIAGAISTGTHGSGIKHGLVGESITELKITLANGETLSCSPEDKPDLFRAALISLGALGIITEVTFKAVPAFSLAWSQAIDSDKRIFEKWEKDLWSQAEFVRIWWFPYMRRAAVWTANVVDPVDLKTGAVKHREPPTSYYDSWLGYYVYHNLLALSRWIPRITPWIEWFVFGMQYGFKNGEVTRIGAVQPSQKAFLLNCLYSQSVNEWAIPLHKGPEALQRLGAWLQNLKPGDPGYVEHGIPYSAEGLWVHSPVEVRASDSTVYTSREANTRPFLDPTQSDGPTLYLNAIMYRPYHREPTYNATERYYLGFEWLMRELGGKPHWAKTFTATQADLARWYGDDFQRWGAVRESVDPEGMFVGPWHRRYLLEPLQRDRLLPLEEIQQTTKKVPARQGGGIEVIGIQNLVAPN.

The region spanning 47 to 217 (FTSLPELYIQ…TEVTFKAVPA (171 aa)) is the FAD-binding PCMH-type domain. H84 bears the Pros-8alpha-FAD histidine mark.

It belongs to the oxygen-dependent FAD-linked oxidoreductase family. FAD is required as a cofactor.

The protein localises to the mitochondrion membrane. The catalysed reaction is D-arabinono-1,4-lactone + O2 = dehydro-D-arabinono-1,4-lactone + H2O2 + H(+). The protein operates within cofactor biosynthesis; D-erythroascorbate biosynthesis; dehydro-D-arabinono-1,4-lactone from D-arabinose: step 2/2. In Neurospora crassa (strain ATCC 24698 / 74-OR23-1A / CBS 708.71 / DSM 1257 / FGSC 987), this protein is Putative D-arabinono-1,4-lactone oxidase (alo-1).